We begin with the raw amino-acid sequence, 498 residues long: ATP synthase subunit beta, chloroplastic (498 aa).

172–179 (GGAGVGKT) is a binding site for ATP.

The protein belongs to the ATPase alpha/beta chains family. F-type ATPases have 2 components, CF(1) - the catalytic core - and CF(0) - the membrane proton channel. CF(1) has five subunits: alpha(3), beta(3), gamma(1), delta(1), epsilon(1). CF(0) has four main subunits: a(1), b(1), b'(1) and c(9-12).

It localises to the plastid. The protein resides in the chloroplast thylakoid membrane. The catalysed reaction is ATP + H2O + 4 H(+)(in) = ADP + phosphate + 5 H(+)(out). Produces ATP from ADP in the presence of a proton gradient across the membrane. The catalytic sites are hosted primarily by the beta subunits. The polypeptide is ATP synthase subunit beta, chloroplastic (Jasminum nudiflorum (Winter jasmine)).